The sequence spans 38 residues: Large ribosomal subunit protein bL36 (38 aa).

This sequence belongs to the bacterial ribosomal protein bL36 family.

The sequence is that of Large ribosomal subunit protein bL36 from Gemmatimonas aurantiaca (strain DSM 14586 / JCM 11422 / NBRC 100505 / T-27).